A 305-amino-acid chain; its full sequence is tRNA dimethylallyltransferase (305 aa).

Gly14–Thr21 lines the ATP pocket. Thr16–Thr21 contributes to the substrate binding site. 3 interaction with substrate tRNA regions span residues Asp39–Leu42, Gln163–Arg167, and Arg243–Arg248.

It belongs to the IPP transferase family. As to quaternary structure, monomer. Mg(2+) serves as cofactor.

The catalysed reaction is adenosine(37) in tRNA + dimethylallyl diphosphate = N(6)-dimethylallyladenosine(37) in tRNA + diphosphate. Functionally, catalyzes the transfer of a dimethylallyl group onto the adenine at position 37 in tRNAs that read codons beginning with uridine, leading to the formation of N6-(dimethylallyl)adenosine (i(6)A). The sequence is that of tRNA dimethylallyltransferase from Ruthia magnifica subsp. Calyptogena magnifica.